The following is an 878-amino-acid chain: Protein translocase subunit SecA (878 aa).

Residues Gln79, 97–101 (GEGKT), and Asp487 contribute to the ATP site.

Belongs to the SecA family.

The protein resides in the plastid. Its subcellular location is the chloroplast stroma. It localises to the chloroplast thylakoid membrane. The catalysed reaction is ATP + H2O + cellular proteinSide 1 = ADP + phosphate + cellular proteinSide 2.. Its function is as follows. Has a central role in coupling the hydrolysis of ATP to the transfer of proteins across the thylakoid membrane. The protein is Protein translocase subunit SecA of Antithamnion sp. (Red alga).